The sequence spans 412 residues: Diphosphomevalonate decarboxylase MVD1, peroxisomal (412 aa).

23-26 (YWGK) is a (R)-5-diphosphomevalonate binding site. A Peroxisomal targeting signal PTS2 motif is present at residues 40–48 (SVTLDPDHL). (R)-5-diphosphomevalonate-binding positions include R78, 161–166 (SGSACR), and T217.

The protein belongs to the diphosphomevalonate decarboxylase family. Homodimer.

Its subcellular location is the peroxisome. It catalyses the reaction (R)-5-diphosphomevalonate + ATP = isopentenyl diphosphate + ADP + phosphate + CO2. It functions in the pathway isoprenoid biosynthesis; isopentenyl diphosphate biosynthesis via mevalonate pathway; isopentenyl diphosphate from (R)-mevalonate: step 3/3. Its function is as follows. Performs the first committed step in the biosynthesis of isoprene-containing compounds such as sterols and terpenoids. Is specific for (R)-5-diphosphomevalonate (MVAPP). The catalytic efficiency with (R)-5-phosphomevalonate (MVAP) as substrate is 10000-fold lower than for MVAPP. Can complement a yeast mutant defective in MVD activity. The polypeptide is Diphosphomevalonate decarboxylase MVD1, peroxisomal (Arabidopsis thaliana (Mouse-ear cress)).